The primary structure comprises 342 residues: Serine/threonine-protein kinase ISR1 (342 aa).

The 284-residue stretch at Trp-59–Phe-342 folds into the Protein kinase domain. Residues Leu-65–Val-73 and Lys-84 each bind ATP. Asp-190 acts as the Proton acceptor in catalysis.

It belongs to the protein kinase superfamily. Ser/Thr protein kinase family.

It catalyses the reaction L-seryl-[protein] + ATP = O-phospho-L-seryl-[protein] + ADP + H(+). The catalysed reaction is L-threonyl-[protein] + ATP = O-phospho-L-threonyl-[protein] + ADP + H(+). Its function is as follows. Probable serine/threonine protein kinase which may function redundantly with MPK1-independent branch of the PCK1 pathway. This chain is Serine/threonine-protein kinase ISR1 (ISR1), found in Eremothecium gossypii (strain ATCC 10895 / CBS 109.51 / FGSC 9923 / NRRL Y-1056) (Yeast).